Reading from the N-terminus, the 556-residue chain is Chaperone protein HscC (556 aa).

The protein belongs to the heat shock protein 70 family.

Its function is as follows. Probable chaperone. Has ATPase activity. Not stimulated by DnaJ. This chain is Chaperone protein HscC (hscC), found in Escherichia coli (strain K12).